The primary structure comprises 202 residues: Coiled-coil domain-containing protein 85B (202 aa).

Met-1 carries the N-acetylmethionine modification. Coiled coils occupy residues 44–82 (RLMQ…DLCC) and 118–141 (QKLA…KELC). A compositionally biased stretch (gly residues) spans 152–162 (GGPGGAVGSGA). Positions 152 to 202 (GGPGGAVGSGAGPTPELALPPCGPRDLGDGSSSTGSVGSPDQLPLACSPDD) are disordered. The span at 180–190 (DGSSSTGSVGS) shows a compositional bias: low complexity.

This sequence belongs to the CCDC85 family. As to quaternary structure, interacts with CEBPB. May interact with CEBPD. Interacts with EURL. Interacts with MCRS1. Interacts with TCF7L2; competes with CTNNB1. Interacts with ANKRD26. Interacts with the beta-catenin family proteins ARVCF, CTNND1, CTNND2 and PKP4. Expressed in white and brown adipose tissue.

The protein resides in the nucleus. Its subcellular location is the cytoplasm. The protein localises to the cytoskeleton. It is found in the microtubule organizing center. It localises to the centrosome. The protein resides in the cell junction. Its subcellular location is the adherens junction. Its function is as follows. Functions as a transcriptional repressor. May inhibit the activity of CTNNB1 in a TP53-dependent manner and thus regulate cell growth. May function in adipocyte differentiation, negatively regulating mitotic clonal expansion. Plays a role in cell-cell adhesion and epithelium development through its interaction with proteins of the beta-catenin family. The chain is Coiled-coil domain-containing protein 85B (Ccdc85b) from Mus musculus (Mouse).